The primary structure comprises 332 residues: Cell growth regulator with RING finger domain protein 1 (332 aa).

Residues 274–309 (CVVCQNGTVNWVLLPCRHTCLCDGCVKYFQQCPMCR) form an RING-type zinc finger.

Ubiquitously expressed with high expression in testis and the cerebellum.

The protein resides in the nucleus. It localises to the endoplasmic reticulum. Its function is as follows. Able to inhibit growth in several cell lines. The polypeptide is Cell growth regulator with RING finger domain protein 1 (CGRRF1) (Homo sapiens (Human)).